The following is a 709-amino-acid chain: DCC-interacting protein 13-alpha (709 aa).

The segment at 1 to 428 (MPGIDKLPIE…RPPTARTSSS (428 aa)) is required for RAB5A binding. Residues 3-268 (GIDKLPIEET…DPLYVPDPDP (266 aa)) form the BAR domain. Residues 215-259 (SENLNEQLEEFLANIGTSVQNVRREMDSDIETMQQTIEDLEVASD) adopt a coiled-coil conformation. One can recognise a PH domain in the interval 277-375 (LTRKAGYLNA…WICTINNISK (99 aa)). 3 disordered regions span residues 397–434 (AVTPSPSFQQRHESLRPAAGQSRPPTARTSSSGSLGSE), 467–491 (GQAKAFGQGGRRTNPFGESGGSTKS), and 645–709 (VKEK…ESEA). Thr399 bears the Phosphothreonine mark. Position 401 is a phosphoserine (Ser401). Positions 403 to 414 (SFQQRHESLRPA) match the F&amp;H motif. Ser410 carries the phosphoserine; by PKA modification. The PID domain maps to 496-656 (SILHQLFIVR…EKQQKELNKQ (161 aa)). Residues 621–673 (LAKQIALHAELDRRASEKQKEIERVKEKQQKELNKQKQIEKDLEEQSRLIAAS) adopt a coiled-coil conformation. Over residues 645–667 (VKEKQQKELNKQKQIEKDLEEQS) the composition is skewed to basic and acidic residues. Positions 674–693 (SRPNQASSEGQFVVLSSSQS) are enriched in polar residues. Residues Ser693 and Ser696 each carry the phosphoserine modification. The span at 700 to 709 (EGGKKRESEA) shows a compositional bias: basic and acidic residues.

Homodimer. Binds RAB5A/Rab5 through an N-terminal domain. This interaction is essential for its recruitment to endosomal membranes as well as its role in cell proliferation. Binds DCC and the catalytic domain of the inactive form of AKT2 through its PID domain. Binds PIK3CA and subunits of the NuRD/MeCP1 complex. Interacts with OCRL and INPP5B. Interacts with NTRK2. Interacts with APPL2; interaction is independent of follicle stimulating hormone stimulation; interaction is decreased by adiponectin in a time-dependent manner. Forms a complex with APPL2 and RUVBL2. Forms a complex comprising APPL2, RUVBL2, CTNNB1, HDAC1 and HDAC2; interaction reduces interaction between CTNNB1, HDAC1, HDAC2 and RUVBL2 leading to the decrease of deacetylase activity of this complex; affects the recruitment of repressive complexes to the Wnt target genes. Interacts with ANXA2. Interacts with TGFBR1; interaction is TGF beta dependent; mediates trafficking of the TGFBR1 from the endosomes to the nucleus via microtubules in a TRAF6-dependent manner. Interacts with PRKCZ. Interacts with PIK3R1 and APPL2. Interacts with ADIPOR1; ADIPOQ enhances this interaction; inhibites adiponectin-stimulated binding of APPL2 to ADIPOR1. In terms of processing, phosphorylation at Ser-410 by PKA severely impairs binding to OCRL. High levels in heart, ovary, pancreas and skeletal muscle.

The protein resides in the early endosome membrane. It is found in the nucleus. Its subcellular location is the cytoplasm. The protein localises to the endosome. It localises to the cell projection. The protein resides in the ruffle. It is found in the cytoplasmic vesicle. Its subcellular location is the phagosome. In terms of biological role, multifunctional adapter protein that binds to various membrane receptors, nuclear factors and signaling proteins to regulate many processes, such as cell proliferation, immune response, endosomal trafficking and cell metabolism. Regulates signaling pathway leading to cell proliferation through interaction with RAB5A and subunits of the NuRD/MeCP1 complex. Functions as a positive regulator of innate immune response via activation of AKT1 signaling pathway by forming a complex with APPL1 and PIK3R1. Inhibits Fc-gamma receptor-mediated phagocytosis through PI3K/Akt signaling in macrophages. Regulates TLR4 signaling in activated macrophages. Involved in trafficking of the TGFBR1 from the endosomes to the nucleus via microtubules in a TRAF6-dependent manner. Plays a role in cell metabolism by regulating adiponecting and insulin signaling pathways. Required for fibroblast migration through HGF cell signaling. Positive regulator of beta-catenin/TCF-dependent transcription through direct interaction with RUVBL2/reptin resulting in the relief of RUVBL2-mediated repression of beta-catenin/TCF target genes by modulating the interactions within the beta-catenin-reptin-HDAC complex. The protein is DCC-interacting protein 13-alpha of Homo sapiens (Human).